We begin with the raw amino-acid sequence, 130 residues long: Large ribosomal subunit protein bL17 (130 aa).

This sequence belongs to the bacterial ribosomal protein bL17 family. As to quaternary structure, part of the 50S ribosomal subunit. Contacts protein L32.

The polypeptide is Large ribosomal subunit protein bL17 (Shewanella pealeana (strain ATCC 700345 / ANG-SQ1)).